The primary structure comprises 272 residues: Universal stress protein MT2699 (272 aa).

ATP-binding positions include glycine 15, 109–115 (GSVGIGR), and 123–124 (ST).

This sequence belongs to the universal stress protein A family.

The chain is Universal stress protein MT2699 from Mycobacterium tuberculosis (strain CDC 1551 / Oshkosh).